The following is a 378-amino-acid chain: Erythronate-4-phosphate dehydrogenase (378 aa).

Substrate-binding residues include Ser45 and Thr66. NAD(+)-binding residues include Asp146 and Thr175. The active site involves Arg208. Asp232 is an NAD(+) binding site. Residue Glu237 is part of the active site. Residue His254 is the Proton donor of the active site. Gly257 is a binding site for NAD(+). Substrate is bound at residue Tyr258.

The protein belongs to the D-isomer specific 2-hydroxyacid dehydrogenase family. PdxB subfamily. In terms of assembly, homodimer.

It is found in the cytoplasm. It catalyses the reaction 4-phospho-D-erythronate + NAD(+) = (R)-3-hydroxy-2-oxo-4-phosphooxybutanoate + NADH + H(+). The protein operates within cofactor biosynthesis; pyridoxine 5'-phosphate biosynthesis; pyridoxine 5'-phosphate from D-erythrose 4-phosphate: step 2/5. Its function is as follows. Catalyzes the oxidation of erythronate-4-phosphate to 3-hydroxy-2-oxo-4-phosphonooxybutanoate. This chain is Erythronate-4-phosphate dehydrogenase, found in Pectobacterium carotovorum subsp. carotovorum (strain PC1).